Here is a 74-residue protein sequence, read N- to C-terminus: U3-agatoxin-Ao1h (74 aa).

An N-terminal signal peptide occupies residues 1-20; it reads MRAIISLLLISTMVFGVIEA. A propeptide spanning residues 21–34 is cleaved from the precursor; the sequence is VSVQKSLKIFEGER. 4 cysteine pairs are disulfide-bonded: Cys37–Cys53, Cys44–Cys58, Cys52–Cys68, and Cys60–Cys66. The residue at position 72 (Asn72) is an Asparagine amide.

This sequence belongs to the neurotoxin 07 (Beta/delta-agtx) family. 03 (aga-4) subfamily. Aga sub-subfamily. In terms of tissue distribution, expressed by the venom gland.

The protein resides in the secreted. In terms of biological role, insecticidal neurotoxin that induces an irreversible spastic paralysis when injected into insects. Modifies presynaptic voltage-gated sodium channels (Nav), causing them to open at the normal resting potential of the nerve. This leads to spontaneous release of neurotransmitter and repetitive action potentials in motor neurons. This chain is U3-agatoxin-Ao1h, found in Agelena orientalis (Funnel-web spider).